Consider the following 78-residue polypeptide: Exodeoxyribonuclease 7 small subunit (78 aa).

Belongs to the XseB family. As to quaternary structure, heterooligomer composed of large and small subunits.

It is found in the cytoplasm. The enzyme catalyses Exonucleolytic cleavage in either 5'- to 3'- or 3'- to 5'-direction to yield nucleoside 5'-phosphates.. Functionally, bidirectionally degrades single-stranded DNA into large acid-insoluble oligonucleotides, which are then degraded further into small acid-soluble oligonucleotides. The sequence is that of Exodeoxyribonuclease 7 small subunit from Actinobacillus succinogenes (strain ATCC 55618 / DSM 22257 / CCUG 43843 / 130Z).